Reading from the N-terminus, the 357-residue chain is Histidinol-phosphate aminotransferase (357 aa).

K222 bears the N6-(pyridoxal phosphate)lysine mark.

This sequence belongs to the class-II pyridoxal-phosphate-dependent aminotransferase family. Histidinol-phosphate aminotransferase subfamily. Homodimer. Pyridoxal 5'-phosphate is required as a cofactor.

It carries out the reaction L-histidinol phosphate + 2-oxoglutarate = 3-(imidazol-4-yl)-2-oxopropyl phosphate + L-glutamate. The protein operates within amino-acid biosynthesis; L-histidine biosynthesis; L-histidine from 5-phospho-alpha-D-ribose 1-diphosphate: step 7/9. This Leuconostoc mesenteroides subsp. mesenteroides (strain ATCC 8293 / DSM 20343 / BCRC 11652 / CCM 1803 / JCM 6124 / NCDO 523 / NBRC 100496 / NCIMB 8023 / NCTC 12954 / NRRL B-1118 / 37Y) protein is Histidinol-phosphate aminotransferase.